The primary structure comprises 875 residues: Protein SEY1 (875 aa).

At 1–749 (MVANGHFASN…KRSAIGGITQ (749 aa)) the chain is on the cytoplasmic side. The GB1/RHD3-type G domain occupies 49 to 307 (GFNYHLISVF…IPADGFAVYA (259 aa)). 59–66 (GSQSTGKS) is a GTP binding site. Positions 482-506 (SNYQQELSLYQKDLERISGQLRRDE) form a coiled coil. Residues 676-704 (LDKWIGHTPSSATPADEEDLTPIGGVDED) form a disordered region. Acidic residues predominate over residues 690–704 (ADEEDLTPIGGVDED). A helical membrane pass occupies residues 750 to 770 (VPLYFYGLLLALGWNEIMAVL). Residues 771–773 (RNP) lie on the Lumenal side of the membrane. The helical transmembrane segment at 774–794 (AYFFLLFVCAIGAYVTYQLNL) threads the bilayer. The Cytoplasmic portion of the chain corresponds to 795-875 (WGPIIKMTEA…ADDDDVDDDF (81 aa)). Residues 831–875 (MAMSGARNATEEHEMSNLNRKSGERGGQKYRGEDVADDDDVDDDF) form a disordered region. Residues 839–864 (ATEEHEMSNLNRKSGERGGQKYRGED) show a composition bias toward basic and acidic residues. Residues 865–875 (VADDDDVDDDF) are compositionally biased toward acidic residues.

Belongs to the TRAFAC class dynamin-like GTPase superfamily. GB1/RHD3 GTPase family. RHD3 subfamily.

It localises to the endoplasmic reticulum membrane. In terms of biological role, cooperates with the reticulon proteins and tubule-shaping DP1 family proteins to generate and maintain the structure of the tubular endoplasmic reticulum network. Has GTPase activity, which is required for its function in ER organization. The protein is Protein SEY1 of Ajellomyces dermatitidis (strain ER-3 / ATCC MYA-2586) (Blastomyces dermatitidis).